The primary structure comprises 344 residues: Zinc metalloproteinase nas-6 (344 aa).

The signal sequence occupies residues 1 to 19 (MLDHVLLLTYCLVSTVVRS). The Peptidase M12A domain maps to 72–266 (NALKNKQLTW…VKINKLYSCK (195 aa)). Disulfide bonds link cysteine 114–cysteine 265, cysteine 135–cysteine 154, cysteine 300–cysteine 334, cysteine 307–cysteine 327, and cysteine 314–cysteine 331. Histidine 162 provides a ligand contact to Zn(2+). Glutamate 163 is a catalytic residue. The Zn(2+) site is built by histidine 166 and histidine 172. In terms of domain architecture, ShKT spans 300–334 (CVDHFADCPHFAQYCTRASFFFVMKSYCPFTCKHC).

Zn(2+) serves as cofactor. In terms of tissue distribution, expressed in pharyngeal and body wall muscles, intestine, hypodermis and pharyngeal mc2 cells.

It is found in the secreted. Metalloprotease. The sequence is that of Zinc metalloproteinase nas-6 (nas-6) from Caenorhabditis elegans.